The chain runs to 865 residues: DNA mismatch repair protein MutS (865 aa).

ATP is bound at residue 609–616; sequence GPNMAGKS.

This sequence belongs to the DNA mismatch repair MutS family.

Functionally, this protein is involved in the repair of mismatches in DNA. It is possible that it carries out the mismatch recognition step. This protein has a weak ATPase activity. The polypeptide is DNA mismatch repair protein MutS (Leuconostoc citreum (strain KM20)).